A 354-amino-acid polypeptide reads, in one-letter code: Methylthioribose-1-phosphate isomerase (354 aa).

Substrate contacts are provided by residues 58-60, Arg101, and Gln204; that span reads RGA. The Proton donor role is filled by Asp245. Position 255 to 256 (255 to 256) interacts with substrate; sequence NK.

Belongs to the eIF-2B alpha/beta/delta subunits family. MtnA subfamily.

The catalysed reaction is 5-(methylsulfanyl)-alpha-D-ribose 1-phosphate = 5-(methylsulfanyl)-D-ribulose 1-phosphate. It functions in the pathway amino-acid biosynthesis; L-methionine biosynthesis via salvage pathway; L-methionine from S-methyl-5-thio-alpha-D-ribose 1-phosphate: step 1/6. In terms of biological role, catalyzes the interconversion of methylthioribose-1-phosphate (MTR-1-P) into methylthioribulose-1-phosphate (MTRu-1-P). This chain is Methylthioribose-1-phosphate isomerase, found in Xylella fastidiosa (strain 9a5c).